A 990-amino-acid polypeptide reads, in one-letter code: Presequence protease, mitochondrial (990 aa).

Residues 1–56 (MLRFQRTVPRVAIRRLANVYSEGAVLHGYKVRRAQEIPEMRMAAVELEHEMTGARH) constitute a mitochondrion transit peptide. A Zn(2+)-binding site is contributed by H84. E87 serves as the catalytic Proton acceptor. H88 lines the Zn(2+) pocket. E160 is an active-site residue. A Zn(2+)-binding site is contributed by E185.

This sequence belongs to the peptidase M16 family. PreP subfamily. As to quaternary structure, monomer and homodimer; homodimerization is induced by binding of the substrate. Zn(2+) serves as cofactor.

It localises to the mitochondrion intermembrane space. Its subcellular location is the mitochondrion matrix. Functionally, degrades mitochondrial transit peptides after their cleavage in the intermembrane space or in the matrix, and presequence peptides; clearance of these peptides is required to keep the presequence processing machinery running. Preferentially cleaves the N-terminal side of paired basic amino acid residues. Also degrades other unstructured peptides. May function as an ATP-dependent peptidase as opposed to a metalloendopeptidase. This Eremothecium gossypii (strain ATCC 10895 / CBS 109.51 / FGSC 9923 / NRRL Y-1056) (Yeast) protein is Presequence protease, mitochondrial (CYM1).